Here is a 76-residue protein sequence, read N- to C-terminus: UPF0291 protein MW2494 (76 aa).

This sequence belongs to the UPF0291 family.

The protein localises to the cytoplasm. The polypeptide is UPF0291 protein MW2494 (Staphylococcus aureus (strain MW2)).